A 300-amino-acid chain; its full sequence is Cation-efflux pump FieF (300 aa).

4 helical membrane passes run 12 to 32, 40 to 60, 82 to 102, and 114 to 134; these read AALA…VAWY, LAAL…LLVV, AALA…LTGF, and PGVG…LVTY. Positions 45 and 49 each coordinate Zn(2+). 2 residues coordinate Zn(2+): H153 and D157. 2 helical membrane passes run 155-175 and 178-198; these read QSDV…WYGF and ADAL…LRMG.

It belongs to the cation diffusion facilitator (CDF) transporter (TC 2.A.4) family. FieF subfamily. Homodimer.

Its subcellular location is the cell inner membrane. It carries out the reaction Zn(2+)(in) + H(+)(out) = Zn(2+)(out) + H(+)(in). The enzyme catalyses Cd(2+)(in) + H(+)(out) = Cd(2+)(out) + H(+)(in). The catalysed reaction is Fe(2+)(in) + H(+)(out) = Fe(2+)(out) + H(+)(in). Divalent metal cation transporter which exports Zn(2+), Cd(2+) and possibly Fe(2+). May be involved in zinc and iron detoxification by efflux. The chain is Cation-efflux pump FieF from Serratia proteamaculans (strain 568).